Reading from the N-terminus, the 400-residue chain is Tetracycline resistance protein, class H (400 aa).

11 helical membrane passes run 5–25 (IIII…IMPV), 42–62 (HYGV…PILG), 72–92 (PILL…AFST), 94–114 (LWML…GAVC), 131–151 (FGFL…LGGL), 159–179 (MPFI…LLFF), 215–235 (LATY…WVLF), 247–267 (IGMS…IVAG), 291–311 (LLLA…CLAA), 337–357 (GTLV…FAFI), and 362–382 (VAYW…MLLI).

It belongs to the major facilitator superfamily. TCR/Tet family.

The protein resides in the cell inner membrane. In terms of biological role, resistance to tetracycline by an active tetracycline efflux. This is an energy-dependent process that decreases the accumulation of the antibiotic in whole cells. This protein functions as a metal-tetracycline/H(+) antiporter. In Pasteurella multocida, this protein is Tetracycline resistance protein, class H (tetA).